The chain runs to 922 residues: Hexokinase-3 (922 aa).

The interval 1-23 is disordered; the sequence is MATIGPSGLHPGERASVCPHEGV. 2 consecutive Hexokinase domains span residues 25-469 and 475-911; these read RPSG…MVTA and AAHR…LVTA. The tract at residues 82-218 is hexokinase small subdomain 1; that stretch reads HGTEQGDFLV…TYRIDVVAMV (137 aa). An ATP-binding site is contributed by 93-100; sequence ELGATGAS. 93–102 serves as a coordination point for D-glucose 6-phosphate; sequence ELGATGASLR. D-glucose-binding positions include Ser166, 183–184, and 219–220; these read TK and ND. A hexokinase large subdomain 1 region spans residues 219–458; the sequence is NDTVGTMMGC…CDVSFIPSVD (240 aa). D-glucose 6-phosphate contacts are provided by Asp220 and Thr243. Residues Asn246, Glu271, and 302 to 305 each bind D-glucose; that span reads QRFE. Residue 424-426 participates in D-glucose 6-phosphate binding; it reads GGR. Residues 436–437 and 540–545 each bind ATP; these read RI and DLGGTN. A hexokinase small subdomain 2 region spans residues 529-660; that stretch reads DGSERGDFLA…AVELNVVAIV (132 aa). D-glucose 6-phosphate is bound at residue 540 to 544; that stretch reads DLGGT. D-glucose is bound by residues 608–609, 625–626, and 661–662; these read SF, TK, and ND. The interval 661-900 is hexokinase large subdomain 2; that stretch reads NDTVGTMMSC…CTVTFLQSED (240 aa). Positions 662 and 685 each coordinate D-glucose 6-phosphate. Thr685 lines the ATP pocket. Residues 687 to 688, Glu713, and Glu747 each bind D-glucose; that span reads TN. ATP is bound by residues 752–753, 789–793, and 868–872; these read GM, TKFLS, and TLYKL. D-glucose 6-phosphate-binding positions include 866-868 and Ser902; that span reads DGT.

It belongs to the hexokinase family.

It carries out the reaction a D-hexose + ATP = a D-hexose 6-phosphate + ADP + H(+). It catalyses the reaction D-fructose + ATP = D-fructose 6-phosphate + ADP + H(+). The enzyme catalyses D-glucose + ATP = D-glucose 6-phosphate + ADP + H(+). It participates in carbohydrate metabolism; hexose metabolism. The protein operates within carbohydrate degradation; glycolysis; D-glyceraldehyde 3-phosphate and glycerone phosphate from D-glucose: step 1/4. Hexokinase is an allosteric enzyme inhibited by its product D-glucose 6-phosphate. In terms of biological role, catalyzes the phosphorylation of hexose, such as D-glucose and D-fructose, to hexose 6-phosphate (D-glucose 6-phosphate and D-fructose 6-phosphate, respectively). Mediates the initial step of glycolysis by catalyzing phosphorylation of D-glucose to D-glucose 6-phosphate. The chain is Hexokinase-3 from Mus musculus (Mouse).